The primary structure comprises 610 residues: MTIKFLSESTINRIAAGEVIERPASVVKELVENAVDASSTKINIILERAGKNLIIISDDGIGMTDKELEIAVERHTTSKLDESDFLKIHTFGFRGEALPSIAAISKMLITSKKRGTDKAFQIKLIGGNEKQITISVHNEGTKIEIRDLFFATPARLKFLRADKTELAVTVDIVKKIALAHPEISFSLTNDSKNLLKLKGQNKDAETNLKQRIIDVIGDDFIKNAAYIDFKILDFSICGYTSIPTYNRASSEDQFLFINNRPVKDKLLQVALRVAYQDYLARDRYPLCAIFLQIDPQFVDVNVHPAKAEVRFHDPNYVRNLLIEAIKNALANKSHVTSTTIASDTLKLFKNPLINKQPTINKEVNVNSKSVDYRSYSSANTPKILQNHICQKLIDTLPHAKVEQEVENRIEHKQQIHKQYKLGAAKAQLHTTYIISQTEDSIVITDQHAAHERLGYEKIKSYIKMDELIKQRLLIPEIVELPNEKRADCLYDHREKLSKLGLTLEKFGEKSIIVTEIPNILGDVNVQKLIQDLADHLSDFSENVALMELIEHVTETYACHYSIRAGRKLSADEMNALLRQMENTPFSGQCNHGRPTYIELKLKDIERLFGR.

The protein belongs to the DNA mismatch repair MutL/HexB family.

This protein is involved in the repair of mismatches in DNA. It is required for dam-dependent methyl-directed DNA mismatch repair. May act as a 'molecular matchmaker', a protein that promotes the formation of a stable complex between two or more DNA-binding proteins in an ATP-dependent manner without itself being part of a final effector complex. This chain is DNA mismatch repair protein MutL, found in Rickettsia canadensis (strain McKiel).